The primary structure comprises 115 residues: MNIEILASKIHRAVVTDANLNYVGSISIGEELIKAANLIENQKVEILDINNGERFATYVIKGKKGEICLNGAAARKVCVGDVVIIVAYASMKFKKAKKFKPTIVHVNNKNEIIKE.

Catalysis depends on Ser-25, which acts as the Schiff-base intermediate with substrate; via pyruvic acid. A Pyruvic acid (Ser) modification is found at Ser-25. Thr-57 contacts substrate. Tyr-58 serves as the catalytic Proton donor. A substrate-binding site is contributed by 71 to 73 (GAA).

Belongs to the PanD family. Heterooctamer of four alpha and four beta subunits. The cofactor is pyruvate. Post-translationally, is synthesized initially as an inactive proenzyme, which is activated by self-cleavage at a specific serine bond to produce a beta-subunit with a hydroxyl group at its C-terminus and an alpha-subunit with a pyruvoyl group at its N-terminus.

It is found in the cytoplasm. It carries out the reaction L-aspartate + H(+) = beta-alanine + CO2. It participates in cofactor biosynthesis; (R)-pantothenate biosynthesis; beta-alanine from L-aspartate: step 1/1. In terms of biological role, catalyzes the pyruvoyl-dependent decarboxylation of aspartate to produce beta-alanine. This Campylobacter concisus (strain 13826) protein is Aspartate 1-decarboxylase.